The primary structure comprises 956 residues: UvrABC system protein A (956 aa).

An ATP-binding site is contributed by 33 to 40 (GLSGSGKS). Residues 252 to 279 (CPYCGFSVGELEPRMFSFNSPFGACPTC) form a C4-type zinc finger. ABC transporter domains are found at residues 309 to 587 (WRPI…KNSI) and 607 to 936 (GNGL…KYLK). 639-646 (GVSGSGKS) provides a ligand contact to ATP. Residues 738–764 (CEACKGDGIIKIEMHFLPDVYVPCEVC) form a C4-type zinc finger.

It belongs to the ABC transporter superfamily. UvrA family. In terms of assembly, forms a heterotetramer with UvrB during the search for lesions.

It localises to the cytoplasm. The UvrABC repair system catalyzes the recognition and processing of DNA lesions. UvrA is an ATPase and a DNA-binding protein. A damage recognition complex composed of 2 UvrA and 2 UvrB subunits scans DNA for abnormalities. When the presence of a lesion has been verified by UvrB, the UvrA molecules dissociate. The chain is UvrABC system protein A from Listeria innocua serovar 6a (strain ATCC BAA-680 / CLIP 11262).